A 602-amino-acid polypeptide reads, in one-letter code: General amino-acid permease GAP1 (602 aa).

Topologically, residues 1–95 are cytoplasmic; it reads MSNTSSYEKN…LKHHLKNRHL (95 aa). Lys-76 participates in a covalent cross-link: Glycyl lysine isopeptide (Lys-Gly) (interchain with G-Cter in ubiquitin). The helical transmembrane segment at 96-116 threads the bilayer; the sequence is QMIAIGGAIGTGLLVGSGTAL. Topologically, residues 117–121 are extracellular; the sequence is RTGGP. The helical transmembrane segment at 122 to 142 threads the bilayer; sequence ASLLIGWGSTGTMIYAMVMAL. The Cytoplasmic portion of the chain corresponds to 143 to 165; sequence GELAVIFPISGGFTTYATRFIDE. Residues 166–185 traverse the membrane as a helical segment; that stretch reads SFGYANNFNYMLQWLVVLPL. Residues 186–204 lie on the Extracellular side of the membrane; the sequence is EIVSASITVNFWGTDPKYR. A helical transmembrane segment spans residues 205-224; the sequence is DGFVALFWLAIVIINMFGVK. The Cytoplasmic segment spans residues 225–237; sequence GYGEAEFVFSFIK. Residues 238–256 form a helical membrane-spanning segment; it reads VITVVGFIILGIILNCGGG. The Extracellular portion of the chain corresponds to 257–280; it reads PTGGYIGGKYWHDPGAFAGDTPGA. A helical transmembrane segment spans residues 281 to 298; sequence KFKGVCSVFVTAAFSFAG. Over 299–321 the chain is Cytoplasmic; sequence SELVGLAASESVEPRKSVPKAAK. The helical transmembrane segment at 322–342 threads the bilayer; sequence QVFWRITLFYILSLLMIGLLV. The Extracellular portion of the chain corresponds to 343 to 376; it reads PYNDKSLIGASSVDAAASPFVIAIKTHGIKGLPS. Residues 377–396 traverse the membrane as a helical segment; that stretch reads VVNVVILIAVLSVGNSAIYA. Over 397–421 the chain is Cytoplasmic; that stretch reads CSRTMVALAEQRFLPEIFSYVDRKG. A helical transmembrane segment spans residues 422–442; the sequence is RPLVGIAVTSAFGLIAFVAAS. The Extracellular segment spans residues 443–451; that stretch reads KKEGEVFNW. The chain crosses the membrane as a helical span at residues 452-472; that stretch reads LLALSGLSSLFTWGGICICHI. The Cytoplasmic portion of the chain corresponds to 473–491; sequence RFRKALAAQGRGLDELSFK. The helical transmembrane segment at 492-510 threads the bilayer; sequence SPTGVWGSYWGLFMVIIMF. Residues 511–529 are Extracellular-facing; the sequence is IAQFYVAVFPVGDSPSAEG. The chain crosses the membrane as a helical span at residues 530–548; the sequence is FFEAYLSFPLVMVMYIGHK. At 549–602 the chain is on the cytoplasmic side; it reads IYKRNWKLFIPAEKMDIDTGRREVDLDLLKQEIAEEKAIMATKPRWYRIWNFWC.

This sequence belongs to the amino acid-polyamine-organocation (APC) superfamily. YAT (TC 2.A.3.10) family. Post-translationally, active permease is phosphorylated. The addition of glutamine causes rapid dephosphorylation and inactivation of the permease. Ubiquitination by RSP5 and the RSP5-associated proteins BUL1 and BUL2, leads the addition of poly-ubiquitin chains being specifically formed by linkage through the lysine 63 residue of ubiquitin and mediates ammonium-induced endocytosis and degradation in the vacuole.

The protein localises to the cell membrane. It localises to the endoplasmic reticulum membrane. Functionally, general amino-acid permease involved in the uptake of all the naturally occurring L-amino-acids, related compounds such as ornithine and citrulline, some D-amino acids, toxic amino acid analogs such as azetidine-2-carboxylate, and the polyamines putrescine and spermidine. Senses its transport substrates to set an appropriate level of transporter activity at the cell surface. Required for FLO11 expression and invasive growth. The polypeptide is General amino-acid permease GAP1 (Saccharomyces cerevisiae (strain ATCC 204508 / S288c) (Baker's yeast)).